Here is a 951-residue protein sequence, read N- to C-terminus: 5'-3' exoribonuclease 2 (951 aa).

The CCHC-type zinc finger occupies 262–278 (PCALCNQFGHEVKDCEG). N6-acetyllysine is present on lysine 286. The disordered stretch occupies residues 408–508 (KDDEDSFRRR…SDSEPEPEDN (101 aa)). The segment covering 416–426 (RRQKEKRKRMK) has biased composition (basic residues). Threonine 439 is subject to Phosphothreonine. 2 stretches are compositionally biased toward polar residues: residues 445-458 (SRNS…SNPR) and 467-485 (QRNS…SDGS). Serine 448, serine 471, serine 473, serine 475, serine 482, serine 487, serine 499, serine 501, and serine 678 each carry phosphoserine. Asymmetric dimethylarginine; alternate occurs at positions 824, 847, and 851. Residues arginine 824, arginine 847, and arginine 851 each carry the omega-N-methylarginine; alternate modification. The residue at position 880 (arginine 880) is an Asymmetric dimethylarginine. Position 883 is an asymmetric dimethylarginine; alternate (arginine 883). The residue at position 883 (arginine 883) is an Omega-N-methylarginine; alternate. The residue at position 895 (arginine 895) is an Omega-N-methylarginine. The segment at 907-951 (NQYQMLGGPGGYPPRRDDHRGGRQGYPREGRKYPLPPPSGRYSWN) is disordered. Positions 920-938 (PRRDDHRGGRQGYPREGRK) are enriched in basic and acidic residues. Position 947 is an asymmetric dimethylarginine; alternate (arginine 947). At arginine 947 the chain carries Omega-N-methylarginine; alternate.

The protein belongs to the 5'-3' exonuclease family. XRN2/RAT1 subfamily. As to quaternary structure, interacts with POLR2A and SMN1/SMN2. Interacts with CDKN2AIP and NKRF. Interacts with CDKN2AIPNL; the interaction is direct. Interacts with TRIM71 (via NHL repeats) in an RNA-dependent manner. Interacts with DHX34; the interaction is RNA-independent. Expressed in the spleen, testis, heart, brain, lung, liver, skeletal muscle, and kidney.

It localises to the nucleus. Its subcellular location is the nucleolus. Functionally, possesses 5'-&gt;3' exoribonuclease activity. May promote the termination of transcription by RNA polymerase II. During transcription termination, cleavage at the polyadenylation site liberates a 5' fragment which is subsequently processed to form the mature mRNA and a 3' fragment which remains attached to the elongating polymerase. The processive degradation of this 3' fragment by this protein may promote termination of transcription. Binds to RNA polymerase II (RNAp II) transcription termination R-loops formed by G-rich pause sites. The sequence is that of 5'-3' exoribonuclease 2 (Xrn2) from Mus musculus (Mouse).